Here is a 142-residue protein sequence, read N- to C-terminus: Coactosin-like protein (142 aa).

A2 bears the N-acetylalanine mark. In terms of domain architecture, ADF-H spans 2–130; the sequence is ATKIDKEACR…EEDFIKNELK (129 aa). The flexible and important for F-actin binding stretch occupies residues 66–75; it reads TGDAMSKRSK. An N6-acetyllysine mark is found at K102 and K126.

It belongs to the actin-binding proteins ADF family. Coactosin subfamily. Interacts with 5-lipoxygenase (ALOX5/5LO) in a calcium-independent manner. Binds to F-actin with a stoichiometry of 1:2.

The protein localises to the cytoplasm. It localises to the cytoskeleton. The protein resides in the nucleus. Binds to F-actin in a calcium-independent manner. Has no direct effect on actin depolymerization. Acts as a chaperone for ALOX5 (5LO), influencing both its stability and activity in leukotrienes synthesis. The protein is Coactosin-like protein (COTL1) of Bos taurus (Bovine).